A 506-amino-acid chain; its full sequence is Cobyric acid synthase (506 aa).

A GATase cobBQ-type domain is found at 251–448 (DITIAIVQLP…LHGLFDSDAF (198 aa)). Cys-332 acts as the Nucleophile in catalysis. His-440 is a catalytic residue.

It belongs to the CobB/CobQ family. CobQ subfamily.

The protein operates within cofactor biosynthesis; adenosylcobalamin biosynthesis. In terms of biological role, catalyzes amidations at positions B, D, E, and G on adenosylcobyrinic A,C-diamide. NH(2) groups are provided by glutamine, and one molecule of ATP is hydrogenolyzed for each amidation. The chain is Cobyric acid synthase from Salmonella arizonae (strain ATCC BAA-731 / CDC346-86 / RSK2980).